The following is a 411-amino-acid chain: Serine/threonine transporter SstT (411 aa).

Transmembrane regions (helical) follow at residues 14 to 34, 43 to 63, 82 to 102, 141 to 161, 192 to 212, 218 to 238, 290 to 310, 330 to 350, and 357 to 377; these read GSLV…ASVA, FLGG…VFIL, IIML…VMSF, ALMS…GFAL, IGIF…ALAG, AVLL…IVFF, IPLG…VLTL, VVAA…LLLI, and FGIP…IGVI.

This sequence belongs to the dicarboxylate/amino acid:cation symporter (DAACS) (TC 2.A.23) family.

The protein resides in the cell inner membrane. It carries out the reaction L-serine(in) + Na(+)(in) = L-serine(out) + Na(+)(out). It catalyses the reaction L-threonine(in) + Na(+)(in) = L-threonine(out) + Na(+)(out). Its function is as follows. Involved in the import of serine and threonine into the cell, with the concomitant import of sodium (symport system). The chain is Serine/threonine transporter SstT from Photobacterium profundum (strain SS9).